A 793-amino-acid chain; its full sequence is Signal transducer and activator of transcription 5A (793 aa).

Y90 carries the post-translational modification Phosphotyrosine. S128 carries the post-translational modification Phosphoserine. The region spanning 589–686 (WNDGAILGFV…EVFAKYYTPV (98 aa)) is the SH2 domain. Y682 carries the phosphotyrosine modification. A Phosphotyrosine; by JAK2 modification is found at Y694. The disordered stretch occupies residues 772-793 (DSLDPRLSPPAGLFTSARSSLS). Position 779 is a phosphoserine (S779).

The protein belongs to the transcription factor STAT family. In terms of assembly, forms a homodimer or a heterodimer with a related family member. Binds NR3C1. Interacts with NCOA1 and SOCS7. Interacts with ERBB4. Interacts with EBF4. Post-translationally, ISGylated. In terms of processing, tyrosine phosphorylated in response to KITLG/SCF, IL2, IL3, IL7, IL15, CSF2/GMCSF, GH1, PRL, EPO and THPO. Activated KIT promotes phosphorylation on tyrosine residues and subsequent translocation to the nucleus. Tyrosine phosphorylated in response to constitutively activated FGFR1, FGFR2, FGFR3 and FGFR4. Tyrosine phosphorylation is required for DNA-binding activity and dimerization. Serine phosphorylation is also required for maximal transcriptional activity. Tyrosine phosphorylated in response to signaling via activated FLT3; wild-type FLT3 results in much weaker phosphorylation than constitutively activated mutant FLT3. Alternatively, can be phosphorylated by JAK2 at Tyr-694. Expressed in heart, lung, and weakly in muscle.

It is found in the cytoplasm. The protein localises to the nucleus. In terms of biological role, carries out a dual function: signal transduction and activation of transcription. Mediates cellular responses to the cytokine KITLG/SCF and other growth factors. May mediate cellular responses to activated FGFR1, FGFR2, FGFR3 and FGFR4. Binds to the GAS element and activates PRL-induced transcription. Regulates the expression of milk proteins during lactation. The protein is Signal transducer and activator of transcription 5A (Stat5a) of Rattus norvegicus (Rat).